Here is a 78-residue protein sequence, read N- to C-terminus: Short neurotoxin OH-26 (78 aa).

Positions 1 to 21 are cleaved as a signal peptide; the sequence is MKNLLLTFLVVTIVCLDLGYT. Cystine bridges form between Cys-24–Cys-40, Cys-33–Cys-58, Cys-62–Cys-70, and Cys-71–Cys-76.

Belongs to the three-finger toxin family. Short-chain subfamily. As to expression, expressed by the venom gland.

Its subcellular location is the secreted. Functionally, this three-finger toxin binds and inhibits the nicotinic acetylcholine receptor (nAChR). This Ophiophagus hannah (King cobra) protein is Short neurotoxin OH-26.